The sequence spans 367 residues: Alanine racemase (367 aa).

K34 serves as the catalytic Proton acceptor; specific for D-alanine. Residue K34 is modified to N6-(pyridoxal phosphate)lysine. R131 serves as a coordination point for substrate. Y258 acts as the Proton acceptor; specific for L-alanine in catalysis. M306 serves as a coordination point for substrate.

This sequence belongs to the alanine racemase family. It depends on pyridoxal 5'-phosphate as a cofactor.

The catalysed reaction is L-alanine = D-alanine. It participates in amino-acid biosynthesis; D-alanine biosynthesis; D-alanine from L-alanine: step 1/1. In terms of biological role, catalyzes the interconversion of L-alanine and D-alanine. May also act on other amino acids. This is Alanine racemase (alr) from Corynebacterium efficiens (strain DSM 44549 / YS-314 / AJ 12310 / JCM 11189 / NBRC 100395).